The sequence spans 417 residues: UDP-N-acetylmuramoylalanine--D-glutamate ligase (417 aa).

101–107 (GTAGKTS) contributes to the ATP binding site.

The protein belongs to the MurCDEF family.

Its subcellular location is the cytoplasm. It carries out the reaction UDP-N-acetyl-alpha-D-muramoyl-L-alanine + D-glutamate + ATP = UDP-N-acetyl-alpha-D-muramoyl-L-alanyl-D-glutamate + ADP + phosphate + H(+). Its pathway is cell wall biogenesis; peptidoglycan biosynthesis. In terms of biological role, cell wall formation. Catalyzes the addition of glutamate to the nucleotide precursor UDP-N-acetylmuramoyl-L-alanine (UMA). The polypeptide is UDP-N-acetylmuramoylalanine--D-glutamate ligase (Thermus thermophilus (strain ATCC BAA-163 / DSM 7039 / HB27)).